We begin with the raw amino-acid sequence, 836 residues long: DNA-directed RNA polymerase subunit beta' (836 aa).

Residues Cys-71, Cys-73, Cys-90, and Cys-93 each contribute to the Zn(2+) site. The Mg(2+) site is built by Asp-623, Asp-625, and Asp-627.

Belongs to the RNA polymerase beta' chain family. RpoC1 subfamily. In terms of assembly, in plastids the minimal PEP RNA polymerase catalytic core is composed of four subunits: alpha, beta, beta', and beta''. When a (nuclear-encoded) sigma factor is associated with the core the holoenzyme is formed, which can initiate transcription. The cofactor is Mg(2+). Zn(2+) serves as cofactor.

Its subcellular location is the plastid. The protein resides in the chloroplast. The enzyme catalyses RNA(n) + a ribonucleoside 5'-triphosphate = RNA(n+1) + diphosphate. Functionally, DNA-dependent RNA polymerase catalyzes the transcription of DNA into RNA using the four ribonucleoside triphosphates as substrates. The protein is DNA-directed RNA polymerase subunit beta' (rpoC1) of Chlorella vulgaris (Green alga).